Here is a 168-residue protein sequence, read N- to C-terminus: Photosystem I assembly protein Ycf3 (168 aa).

TPR repeat units follow at residues 35–68 (AFTYYRDGMSAQSEGNYAEALQNYYEAMRPEIDP), 72–105 (SYILYNIGLIHTSNGEHTKALEYYFRALERNPFL), and 120–153 (GEEAIRQGDSEIAEAWFDQAAEYWKQAIALTPGN).

This sequence belongs to the Ycf3 family.

Its subcellular location is the plastid. It is found in the chloroplast thylakoid membrane. Its function is as follows. Essential for the assembly of the photosystem I (PSI) complex. May act as a chaperone-like factor to guide the assembly of the PSI subunits. The sequence is that of Photosystem I assembly protein Ycf3 from Nuphar advena (Common spatterdock).